A 206-amino-acid polypeptide reads, in one-letter code: LexA repressor (206 aa).

A DNA-binding region (H-T-H motif) is located at residues 28–48 (RAEIARELGFRSANAAEEHLK). Catalysis depends on for autocatalytic cleavage activity residues Ser123 and Lys160.

The protein belongs to the peptidase S24 family. Homodimer.

It catalyses the reaction Hydrolysis of Ala-|-Gly bond in repressor LexA.. Represses a number of genes involved in the response to DNA damage (SOS response), including recA and lexA. In the presence of single-stranded DNA, RecA interacts with LexA causing an autocatalytic cleavage which disrupts the DNA-binding part of LexA, leading to derepression of the SOS regulon and eventually DNA repair. This Vibrio campbellii (strain ATCC BAA-1116) protein is LexA repressor.